A 328-amino-acid polypeptide reads, in one-letter code: 17-beta-hydroxysteroid dehydrogenase type 1 (328 aa).

Residues 10 to 38 (GCSSGIGLHLAVRLASDPSQSFKVYATLR) and Asp66 contribute to the NADP(+) site. Ser135 carries the phosphoserine; by PKA modification. Position 143 (Ser143) interacts with substrate. The active-site Proton acceptor is the Tyr156. Lys160 is an NADP(+) binding site. The tract at residues 291–328 (KAEAGAEAGGGAGPGAEDEAGRGAVGDPELGDPPAAPQ) is disordered.

The protein belongs to the short-chain dehydrogenases/reductases (SDR) family. As to quaternary structure, homodimer. Exists predominantly as a homodimer but also exits as monomer.

The protein localises to the cytoplasm. It carries out the reaction 17beta-estradiol + NAD(+) = estrone + NADH + H(+). It catalyses the reaction 17beta-estradiol + NADP(+) = estrone + NADPH + H(+). The enzyme catalyses testosterone + NADP(+) = androst-4-ene-3,17-dione + NADPH + H(+). Its pathway is steroid biosynthesis; estrogen biosynthesis. Favors the reduction of estrogens and androgens. Converts estrone (E1) to a more potent estrogen, 17beta-estradiol (E2). Also has 20-alpha-HSD activity. Uses preferentially NADH. In Homo sapiens (Human), this protein is 17-beta-hydroxysteroid dehydrogenase type 1.